We begin with the raw amino-acid sequence, 319 residues long: Acetyl-coenzyme A carboxylase carboxyl transferase subunit alpha (319 aa).

In terms of domain architecture, CoA carboxyltransferase C-terminal spans 43–296 (LRDKSIELTR…KKQLLFDLSE (254 aa)).

Belongs to the AccA family. As to quaternary structure, acetyl-CoA carboxylase is a heterohexamer composed of biotin carboxyl carrier protein (AccB), biotin carboxylase (AccC) and two subunits each of ACCase subunit alpha (AccA) and ACCase subunit beta (AccD).

It localises to the cytoplasm. The enzyme catalyses N(6)-carboxybiotinyl-L-lysyl-[protein] + acetyl-CoA = N(6)-biotinyl-L-lysyl-[protein] + malonyl-CoA. The protein operates within lipid metabolism; malonyl-CoA biosynthesis; malonyl-CoA from acetyl-CoA: step 1/1. Functionally, component of the acetyl coenzyme A carboxylase (ACC) complex. First, biotin carboxylase catalyzes the carboxylation of biotin on its carrier protein (BCCP) and then the CO(2) group is transferred by the carboxyltransferase to acetyl-CoA to form malonyl-CoA. The protein is Acetyl-coenzyme A carboxylase carboxyl transferase subunit alpha of Baumannia cicadellinicola subsp. Homalodisca coagulata.